Consider the following 206-residue polypeptide: MARSKSSAGWLKEHFDDYYVNKAKQDGWRSRAIYKLQEIDEKDQLFSKGMTVIDLGAAPGGWSQWTTHQTGDEGRVFALDILPVEPFAGVTFIQGDFQEDDVYQSLLDALDGREVDLVMSDMAPNMTGNKGVDIPRAMYLVELCVDLADQVLKPNGDLLMKVFQGEGYDQLLKSLREKYQKVLTRKPKASRPRSKEIYLLARGKKA.

Residues G60, W62, D80, D96, and D121 each coordinate S-adenosyl-L-methionine. The Proton acceptor role is filled by K161.

This sequence belongs to the class I-like SAM-binding methyltransferase superfamily. RNA methyltransferase RlmE family.

The protein resides in the cytoplasm. The enzyme catalyses uridine(2552) in 23S rRNA + S-adenosyl-L-methionine = 2'-O-methyluridine(2552) in 23S rRNA + S-adenosyl-L-homocysteine + H(+). Functionally, specifically methylates the uridine in position 2552 of 23S rRNA at the 2'-O position of the ribose in the fully assembled 50S ribosomal subunit. This chain is Ribosomal RNA large subunit methyltransferase E, found in Hydrogenovibrio crunogenus (strain DSM 25203 / XCL-2) (Thiomicrospira crunogena).